The sequence spans 691 residues: Elongation factor G (691 aa).

The 276-residue stretch at 8 to 283 (EDYRNFGIMA…AVVDYLPSPI (276 aa)) folds into the tr-type G domain. GTP contacts are provided by residues 17 to 24 (AHIDAGKT), 81 to 85 (DTPGH), and 135 to 138 (NKMD).

It belongs to the TRAFAC class translation factor GTPase superfamily. Classic translation factor GTPase family. EF-G/EF-2 subfamily.

The protein resides in the cytoplasm. Its function is as follows. Catalyzes the GTP-dependent ribosomal translocation step during translation elongation. During this step, the ribosome changes from the pre-translocational (PRE) to the post-translocational (POST) state as the newly formed A-site-bound peptidyl-tRNA and P-site-bound deacylated tRNA move to the P and E sites, respectively. Catalyzes the coordinated movement of the two tRNA molecules, the mRNA and conformational changes in the ribosome. This chain is Elongation factor G, found in Methylocella silvestris (strain DSM 15510 / CIP 108128 / LMG 27833 / NCIMB 13906 / BL2).